The sequence spans 137 residues: Nucleoside diphosphate kinase (137 aa).

Lys-9, Phe-57, Arg-85, Thr-91, Arg-102, and Asn-112 together coordinate ATP. The Pros-phosphohistidine intermediate role is filled by His-115.

This sequence belongs to the NDK family. Homotetramer. Requires Mg(2+) as cofactor.

It localises to the cytoplasm. It carries out the reaction a 2'-deoxyribonucleoside 5'-diphosphate + ATP = a 2'-deoxyribonucleoside 5'-triphosphate + ADP. The enzyme catalyses a ribonucleoside 5'-diphosphate + ATP = a ribonucleoside 5'-triphosphate + ADP. Major role in the synthesis of nucleoside triphosphates other than ATP. The ATP gamma phosphate is transferred to the NDP beta phosphate via a ping-pong mechanism, using a phosphorylated active-site intermediate. This Thermus thermophilus (strain ATCC BAA-163 / DSM 7039 / HB27) protein is Nucleoside diphosphate kinase.